A 226-amino-acid polypeptide reads, in one-letter code: V-type proton ATPase subunit E (226 aa).

Belongs to the V-ATPase E subunit family. As to quaternary structure, V-ATPase is a heteromultimeric enzyme made up of two complexes: the ATP-hydrolytic V1 complex and the proton translocation V0 complex. The V1 complex consists of three catalytic AB heterodimers that form a heterohexamer, three peripheral stalks each consisting of EG heterodimers, one central rotor including subunits D and F, and the regulatory subunits C and H. The proton translocation complex V0 consists of the proton transport subunit a, a ring of proteolipid subunits c9c'', rotary subunit d, subunits e and f, and the accessory subunits VhaAC45 and ATP6AP2.

Functionally, subunit of the V1 complex of vacuolar(H+)-ATPase (V-ATPase), a multisubunit enzyme composed of a peripheral complex (V1) that hydrolyzes ATP and a membrane integral complex (V0) that translocates protons. V-ATPase is responsible for acidifying and maintaining the pH of intracellular compartments and in some cell types, is targeted to the plasma membrane, where it is responsible for acidifying the extracellular environment. The protein is V-type proton ATPase subunit E (Vha26) of Drosophila melanogaster (Fruit fly).